A 236-amino-acid polypeptide reads, in one-letter code: Purine nucleoside phosphorylase DeoD-type (236 aa).

His-4 is a binding site for a purine D-ribonucleoside. Phosphate is bound by residues Gly-20, Arg-24, Arg-43, and 87–90; that span reads RVGT. Residues 178–180 and 202–203 contribute to the a purine D-ribonucleoside site; these read EME and SD. The Proton donor role is filled by Asp-203.

The protein belongs to the PNP/UDP phosphorylase family. In terms of assembly, homohexamer; trimer of homodimers.

The catalysed reaction is a purine D-ribonucleoside + phosphate = a purine nucleobase + alpha-D-ribose 1-phosphate. It catalyses the reaction a purine 2'-deoxy-D-ribonucleoside + phosphate = a purine nucleobase + 2-deoxy-alpha-D-ribose 1-phosphate. Its function is as follows. Catalyzes the reversible phosphorolytic breakdown of the N-glycosidic bond in the beta-(deoxy)ribonucleoside molecules, with the formation of the corresponding free purine bases and pentose-1-phosphate. The sequence is that of Purine nucleoside phosphorylase DeoD-type from Geobacillus kaustophilus (strain HTA426).